We begin with the raw amino-acid sequence, 71 residues long: DNA-directed RNA polymerase subunit omega (71 aa).

The protein belongs to the RNA polymerase subunit omega family. The RNAP catalytic core consists of 2 alpha, 1 beta, 1 beta' and 1 omega subunit. When a sigma factor is associated with the core the holoenzyme is formed, which can initiate transcription.

It catalyses the reaction RNA(n) + a ribonucleoside 5'-triphosphate = RNA(n+1) + diphosphate. Functionally, promotes RNA polymerase assembly. Latches the N- and C-terminal regions of the beta' subunit thereby facilitating its interaction with the beta and alpha subunits. The polypeptide is DNA-directed RNA polymerase subunit omega (Alkaliphilus oremlandii (strain OhILAs) (Clostridium oremlandii (strain OhILAs))).